The sequence spans 693 residues: Elongation factor G (693 aa).

The tr-type G domain occupies 8–282 (EKTRNIGIMA…AVIDYLPSPL (275 aa)). GTP-binding positions include 17–24 (AHVDAGKT), 81–85 (DTPGH), and 135–138 (NKMD).

This sequence belongs to the TRAFAC class translation factor GTPase superfamily. Classic translation factor GTPase family. EF-G/EF-2 subfamily.

The protein resides in the cytoplasm. Functionally, catalyzes the GTP-dependent ribosomal translocation step during translation elongation. During this step, the ribosome changes from the pre-translocational (PRE) to the post-translocational (POST) state as the newly formed A-site-bound peptidyl-tRNA and P-site-bound deacylated tRNA move to the P and E sites, respectively. Catalyzes the coordinated movement of the two tRNA molecules, the mRNA and conformational changes in the ribosome. In Streptococcus pneumoniae (strain Hungary19A-6), this protein is Elongation factor G.